Reading from the N-terminus, the 177-residue chain is Adenine phosphoribosyltransferase (177 aa).

This sequence belongs to the purine/pyrimidine phosphoribosyltransferase family. In terms of assembly, homodimer.

Its subcellular location is the cytoplasm. It carries out the reaction AMP + diphosphate = 5-phospho-alpha-D-ribose 1-diphosphate + adenine. It participates in purine metabolism; AMP biosynthesis via salvage pathway; AMP from adenine: step 1/1. In terms of biological role, catalyzes a salvage reaction resulting in the formation of AMP, that is energically less costly than de novo synthesis. This is Adenine phosphoribosyltransferase from Chlorobium phaeobacteroides (strain DSM 266 / SMG 266 / 2430).